Reading from the N-terminus, the 439-residue chain is Fibroleukin (439 aa).

An N-terminal signal peptide occupies residues Met1–Ala23. An N-linked (GlcNAc...) asparagine glycan is attached at Asn25. A coiled-coil region spans residues Ser73–Asn165. A disordered region spans residues Ala103–Gly126. Residues Asn179, Asn235, Asn263, and Asn336 are each glycosylated (N-linked (GlcNAc...) asparagine). Positions Pro204–His436 constitute a Fibrinogen C-terminal domain. Cys213 and Cys242 are oxidised to a cystine. A disulfide bridge connects residues Cys371 and Cys384.

As to quaternary structure, homotetramer; disulfide-linked. In terms of tissue distribution, constitutively expressed in cytotoxic T-cells.

It localises to the secreted. Functionally, may play a role in physiologic lymphocyte functions at mucosal sites. This chain is Fibroleukin (FGL2), found in Homo sapiens (Human).